Consider the following 397-residue polypeptide: S-layer protein B (397 aa).

Residues 1-24 (MVVKKTFVLSTLILISVVALVSTA) form the signal peptide. Positions 259 to 314 (INALNNEVSTLRSEISSLNSTIASLNKSLANANTQISNLQSEITTLNSEIGKLNST) form a coiled coil. Residues 373–393 (GGIIAGIIGLIVAIVAIVLVM) traverse the membrane as a helical segment.

This sequence belongs to the Sulfolobales SlaB family. In terms of assembly, the mushroom-shaped unit cells of the Sulfolobales' S-layers may consist of three SlaB subunits and six SlaA subunits.

It localises to the secreted. Its subcellular location is the cell wall. The protein localises to the S-layer. It is found in the cell membrane. Functionally, S-layer small protein. May anchor the complex to the cell membrane. The protein is S-layer protein B of Saccharolobus solfataricus (strain ATCC 35092 / DSM 1617 / JCM 11322 / P2) (Sulfolobus solfataricus).